The following is a 339-amino-acid chain: Ketol-acid reductoisomerase (NADP(+)) (339 aa).

The KARI N-terminal Rossmann domain maps to 1–182; sequence MRVYYDRDAD…GGGRSGIIET (182 aa). NADP(+)-binding positions include 24 to 27, Lys48, Ser51, Thr53, and 83 to 86; these read YGSQ and DELQ. His108 is a catalytic residue. Gly134 serves as a coordination point for NADP(+). Residues 183 to 328 enclose the KARI C-terminal knotted domain; that stretch reads NFREECETDL…AKLRGMMPWI (146 aa). Asp191, Glu195, Glu227, and Glu231 together coordinate Mg(2+). Substrate is bound at residue Ser252.

The protein belongs to the ketol-acid reductoisomerase family. It depends on Mg(2+) as a cofactor.

The catalysed reaction is (2R)-2,3-dihydroxy-3-methylbutanoate + NADP(+) = (2S)-2-acetolactate + NADPH + H(+). It catalyses the reaction (2R,3R)-2,3-dihydroxy-3-methylpentanoate + NADP(+) = (S)-2-ethyl-2-hydroxy-3-oxobutanoate + NADPH + H(+). Its pathway is amino-acid biosynthesis; L-isoleucine biosynthesis; L-isoleucine from 2-oxobutanoate: step 2/4. The protein operates within amino-acid biosynthesis; L-valine biosynthesis; L-valine from pyruvate: step 2/4. In terms of biological role, involved in the biosynthesis of branched-chain amino acids (BCAA). Catalyzes an alkyl-migration followed by a ketol-acid reduction of (S)-2-acetolactate (S2AL) to yield (R)-2,3-dihydroxy-isovalerate. In the isomerase reaction, S2AL is rearranged via a Mg-dependent methyl migration to produce 3-hydroxy-3-methyl-2-ketobutyrate (HMKB). In the reductase reaction, this 2-ketoacid undergoes a metal-dependent reduction by NADPH to yield (R)-2,3-dihydroxy-isovalerate. The chain is Ketol-acid reductoisomerase (NADP(+)) from Rhizobium etli (strain ATCC 51251 / DSM 11541 / JCM 21823 / NBRC 15573 / CFN 42).